The primary structure comprises 438 residues: Gamma-glutamyl phosphate reductase (438 aa).

The tract at residues 1 to 21 is disordered; the sequence is MTAQTSSDVTDQKTDLTRESE. A compositionally biased stretch (basic and acidic residues) spans 10–21; the sequence is TDQKTDLTRESE.

The protein belongs to the gamma-glutamyl phosphate reductase family.

It is found in the cytoplasm. It catalyses the reaction L-glutamate 5-semialdehyde + phosphate + NADP(+) = L-glutamyl 5-phosphate + NADPH + H(+). The protein operates within amino-acid biosynthesis; L-proline biosynthesis; L-glutamate 5-semialdehyde from L-glutamate: step 2/2. In terms of biological role, catalyzes the NADPH-dependent reduction of L-glutamate 5-phosphate into L-glutamate 5-semialdehyde and phosphate. The product spontaneously undergoes cyclization to form 1-pyrroline-5-carboxylate. This is Gamma-glutamyl phosphate reductase from Corynebacterium efficiens (strain DSM 44549 / YS-314 / AJ 12310 / JCM 11189 / NBRC 100395).